A 286-amino-acid polypeptide reads, in one-letter code: L-cysteine S-thiosulfotransferase subunit SoxA (286 aa).

An N-terminal signal peptide occupies residues M1–A26. A Cytochrome c domain is found at L80 to S166. Heme is bound by residues C100, C103, H104, C138, C202, C205, and H206. Residue R243 coordinates substrate. C247 contacts heme. C247 functions as the Cysteine persulfide intermediate in the catalytic mechanism.

This sequence belongs to the SoxA family. As to quaternary structure, heterodimer of SoxA and SoxX. Heme serves as cofactor. Post-translationally, cysteine persulfide at Cys-247.

The protein resides in the periplasm. The enzyme catalyses L-cysteinyl-[SoxY protein] + thiosulfate + 2 Fe(III)-[cytochrome c] = S-sulfosulfanyl-L-cysteinyl-[SoxY protein] + 2 Fe(II)-[cytochrome c] + 2 H(+). The catalysed reaction is S-sulfanyl-L-cysteinyl-[SoxY protein] + thiosulfate + 2 Fe(III)-[cytochrome c] = S-(2-sulfodisulfanyl)-L-cysteinyl-[SoxY protein] + 2 Fe(II)-[cytochrome c] + 2 H(+). In terms of biological role, C-type diheme cytochrome, which is part of the SoxAX cytochrome complex involved in sulfur oxidation. The SoxAX complex catalyzes the formation of a heterodisulfide bond between the conserved cysteine residue on a sulfur carrier SoxYZ complex subunit SoxY and thiosulfate or other inorganic sulfur substrates. This leads to the liberation of two electrons, which may be transferred from the SoxAX complex to another cytochrome c that then channels them into the respiratory electron transport chain. Some electrons may be used for reductive CO(2) fixation. The protein is L-cysteine S-thiosulfotransferase subunit SoxA of Pseudaminobacter salicylatoxidans.